Consider the following 252-residue polypeptide: Cell division protein ZapD (252 aa).

This sequence belongs to the ZapD family. As to quaternary structure, interacts with FtsZ.

Its subcellular location is the cytoplasm. Cell division factor that enhances FtsZ-ring assembly. Directly interacts with FtsZ and promotes bundling of FtsZ protofilaments, with a reduction in FtsZ GTPase activity. The sequence is that of Cell division protein ZapD from Cupriavidus pinatubonensis (strain JMP 134 / LMG 1197) (Cupriavidus necator (strain JMP 134)).